Reading from the N-terminus, the 792-residue chain is G-type lectin S-receptor-like serine/threonine-protein kinase At1g61440 (792 aa).

The N-terminal stretch at 1 to 17 is a signal peptide; the sequence is MGKKRIVLLLFISFSYA. Residues 18-137 enclose the Bulb-type lectin domain; the sequence is EITKESPLSI…VTGRTLWESF (120 aa). At 18-419 the chain is on the extracellular side; the sequence is EITKESPLSI…ELDVHKRKMT (402 aa). N-linked (GlcNAc...) asparagine glycans are attached at residues asparagine 46, asparagine 127, and asparagine 229. Residues 271–307 form the EGF-like; atypical domain; that stretch reads PANSCDIYGVCGPFGFCVISDPPKCKCFKGFVPKSIE. Cystine bridges form between cysteine 275–cysteine 287 and cysteine 281–cysteine 295. Asparagine 313, asparagine 329, and asparagine 368 each carry an N-linked (GlcNAc...) asparagine glycan. In terms of domain architecture, PAN spans 326–408; that stretch reads CQGNSTGKDA…GEILSIRLAH (83 aa). Intrachain disulfides connect cysteine 361–cysteine 382 and cysteine 365–cysteine 371. The helical transmembrane segment at 420–440 threads the bilayer; sequence IVASTVSLTLFVILGFATFGF. The Cytoplasmic segment spans residues 441-792; sequence WRNRVKHHDA…EMTESVILGR (352 aa). The Protein kinase domain maps to 478–763; that stretch reads FSLSNKLGHG…DLPLPKQPTF (286 aa). Residues 484–492 and lysine 506 each bind ATP; that span reads LGHGGFGSV. Serine 512 and serine 527 each carry phosphoserine. A caM-binding region spans residues 567 to 584; it reads RKRLELDWPKRFDIIQGI. The active-site Proton acceptor is the aspartate 603. Serine 607 and serine 620 each carry phosphoserine. Threonine 637 carries the phosphothreonine modification. Phosphoserine occurs at positions 680 and 774.

Belongs to the protein kinase superfamily. Ser/Thr protein kinase family.

The protein localises to the cell membrane. It carries out the reaction L-seryl-[protein] + ATP = O-phospho-L-seryl-[protein] + ADP + H(+). It catalyses the reaction L-threonyl-[protein] + ATP = O-phospho-L-threonyl-[protein] + ADP + H(+). The chain is G-type lectin S-receptor-like serine/threonine-protein kinase At1g61440 from Arabidopsis thaliana (Mouse-ear cress).